Reading from the N-terminus, the 414-residue chain is 3-phosphoshikimate 1-carboxyvinyltransferase (414 aa).

Positions 20, 21, and 25 each coordinate 3-phosphoshikimate. A phosphoenolpyruvate-binding site is contributed by Lys-20. The phosphoenolpyruvate site is built by Gly-85 and Arg-113. Ser-154, Ser-155, Gln-156, Ser-181, Asp-296, and Lys-323 together coordinate 3-phosphoshikimate. Position 156 (Gln-156) interacts with phosphoenolpyruvate. Asp-296 serves as the catalytic Proton acceptor. The phosphoenolpyruvate site is built by Arg-327, Arg-371, and Lys-395.

Belongs to the EPSP synthase family. In terms of assembly, monomer.

Its subcellular location is the cytoplasm. The enzyme catalyses 3-phosphoshikimate + phosphoenolpyruvate = 5-O-(1-carboxyvinyl)-3-phosphoshikimate + phosphate. The protein operates within metabolic intermediate biosynthesis; chorismate biosynthesis. Its function is as follows. Catalyzes the transfer of the enolpyruvyl moiety of phosphoenolpyruvate (PEP) to the 5-hydroxyl of shikimate-3-phosphate (S3P) to produce enolpyruvyl shikimate-3-phosphate and inorganic phosphate. In Saccharolobus islandicus (strain M.14.25 / Kamchatka #1) (Sulfolobus islandicus), this protein is 3-phosphoshikimate 1-carboxyvinyltransferase.